An 85-amino-acid polypeptide reads, in one-letter code: Large ribosomal subunit protein bL27 (85 aa).

The disordered stretch occupies residues 1–21; that stretch reads MAHKKGQGSTQNNRDSAGRRL.

Belongs to the bacterial ribosomal protein bL27 family.

The polypeptide is Large ribosomal subunit protein bL27 (Nitratiruptor sp. (strain SB155-2)).